Consider the following 139-residue polypeptide: Diacylglycerol acyltransferase/mycolyltransferase Ag85A (139 aa).

Ser-10 serves as the catalytic Nucleophile. The substrate site is built by Ser-10 and Asp-38. The active site involves Glu-114. Residues 116–119 (FVRT) and Lys-123 contribute to the substrate site.

It belongs to the mycobacterial A85 antigen family. In terms of assembly, homodimer.

It localises to the secreted. The protein resides in the cell wall. Its subcellular location is the cytoplasm. It carries out the reaction an acyl-CoA + a 1,2-diacyl-sn-glycerol = a triacyl-sn-glycerol + CoA. It catalyses the reaction 2 alpha,alpha'-trehalose 6-mycolate = alpha,alpha'-trehalose 6,6'-bismycolate + alpha,alpha-trehalose. Functionally, the antigen 85 proteins (FbpA, FbpB, FbpC) are responsible for the high affinity of mycobacteria for fibronectin, a large adhesive glycoprotein, which facilitates the attachment of M.tuberculosis to murine alveolar macrophages (AMs). They also help to maintain the integrity of the cell wall by catalyzing the transfer of mycolic acids to cell wall arabinogalactan, and through the synthesis of alpha,alpha-trehalose dimycolate (TDM, cord factor). They catalyze the transfer of a mycoloyl residue from one molecule of alpha,alpha-trehalose monomycolate (TMM) to another TMM, leading to the formation of TDM. FbpA mediates triacylglycerol (TAG) formation with long-chain acyl-CoA as the acyl donor and 1,2-dipalmitoyl-sn-glycerol (1,2-dipalmitin) as the acyl acceptor. It has a preference for C26:0-CoA over C18:1-CoA. This is Diacylglycerol acyltransferase/mycolyltransferase Ag85A (fbpA) from Mycobacterium marinum.